We begin with the raw amino-acid sequence, 224 residues long: Trans-acting factor B (224 aa).

In terms of biological role, plasmid partition require REP1, REP2, and a cis-acting DNA sequence (known as STB). REP1 may act by intercalating in the yeast nuclear matrix and binding STB either directly or via REP2. This is Trans-acting factor B (B) from Lachancea fermentati (Zygosaccharomyces fermentati).